We begin with the raw amino-acid sequence, 477 residues long: Asparaginyl-tRNA synthetase (477 aa).

A mitochondrion-targeting transit peptide spans 1–14; sequence MLGVRCLLRSVRFC. An N6-acetyllysine modification is found at K353.

It belongs to the class-II aminoacyl-tRNA synthetase family. In terms of assembly, homodimer.

It localises to the mitochondrion matrix. The protein localises to the mitochondrion. It catalyses the reaction tRNA(Asn) + L-asparagine + ATP = L-asparaginyl-tRNA(Asn) + AMP + diphosphate + H(+). Its function is as follows. Mitochondrial aminoacyl-tRNA synthetase that catalyzes the specific attachment of the asparagine amino acid (aa) to the homologous transfer RNA (tRNA), further participating in protein synthesis. The reaction occurs in a two steps: asparagine is first activated by ATP to form Asn-AMP and then transferred to the acceptor end of tRNA(Asn). This is Asparaginyl-tRNA synthetase from Homo sapiens (Human).